We begin with the raw amino-acid sequence, 617 residues long: Proline--tRNA ligase (617 aa).

It belongs to the class-II aminoacyl-tRNA synthetase family. ProS type 1 subfamily. As to quaternary structure, homodimer.

It localises to the cytoplasm. The catalysed reaction is tRNA(Pro) + L-proline + ATP = L-prolyl-tRNA(Pro) + AMP + diphosphate. Catalyzes the attachment of proline to tRNA(Pro) in a two-step reaction: proline is first activated by ATP to form Pro-AMP and then transferred to the acceptor end of tRNA(Pro). As ProRS can inadvertently accommodate and process non-cognate amino acids such as alanine and cysteine, to avoid such errors it has two additional distinct editing activities against alanine. One activity is designated as 'pretransfer' editing and involves the tRNA(Pro)-independent hydrolysis of activated Ala-AMP. The other activity is designated 'posttransfer' editing and involves deacylation of mischarged Ala-tRNA(Pro). The misacylated Cys-tRNA(Pro) is not edited by ProRS. The polypeptide is Proline--tRNA ligase (Streptococcus pneumoniae (strain ATCC 700669 / Spain 23F-1)).